A 306-amino-acid chain; its full sequence is Methionyl-tRNA formyltransferase (306 aa).

(6S)-5,6,7,8-tetrahydrofolate is bound at residue 109 to 112 (SILP).

Belongs to the Fmt family.

The enzyme catalyses L-methionyl-tRNA(fMet) + (6R)-10-formyltetrahydrofolate = N-formyl-L-methionyl-tRNA(fMet) + (6S)-5,6,7,8-tetrahydrofolate + H(+). Its function is as follows. Attaches a formyl group to the free amino group of methionyl-tRNA(fMet). The formyl group appears to play a dual role in the initiator identity of N-formylmethionyl-tRNA by promoting its recognition by IF2 and preventing the misappropriation of this tRNA by the elongation apparatus. The polypeptide is Methionyl-tRNA formyltransferase (Sphingopyxis alaskensis (strain DSM 13593 / LMG 18877 / RB2256) (Sphingomonas alaskensis)).